We begin with the raw amino-acid sequence, 557 residues long: MSGDSERAVAPGVVPAPCASKVELRLSCRHLLDRDPLTKSDPSVVLLQQAQGQWLQVDRTEVVKSSLHPVFSKVFTVDYYFEGVQKLRFEVYDTHGPSGLTCQDDDFLGGMECTLGQIVAQKKMTRPLLLRFGRNAGKSTITVIAEDISGNNGYVELSFQARKLDDKDLFSKSDPFLELYRVNDDGSEQLVYRTEVVKNNLNPVWEPFKVSLNSLCSCEETRPLKCLVWDYDSRGKHDFIGDFTTTFAEMQKAFEEEQQAQWDCVNAKYKQKKRNYKNSGVVILADLKLHRVHSFLDYIMGGCQIHCTVAIDFTASNGDPRNSCSLHHINPYQPNEYLRALVAVGEVCQDYDSDKRFSALGFGARIPPKYEVSHDFAINFNPEDDECEGIQGVVEAYQNCLPKVQLYGPTNVAPIISKVARMAAAEESTGEASQYYILLILTDGVVTDMSDTREAIVRASHLPMSVIIVGVGNADFTDMQILDGDDGVLRSPRGEPALRDIVQFVPFRELKNASPAALAKCVLAEVPKQVVEYYSHKELPPRSLGAQTGEAAASSAP.

2 C2 domains span residues 1-128 and 135-263; these read MSGD…TRPL and NAGK…AQWD. The Ca(2+) site is built by aspartate 168, aspartate 174, aspartate 230, aspartate 232, and aspartate 238. Residues 306–505 form the VWFA domain; sequence HCTVAIDFTA…PALRDIVQFV (200 aa).

The protein belongs to the copine family. Requires Ca(2+) as cofactor.

The protein resides in the cytoplasm. It is found in the nucleus. Its subcellular location is the cell membrane. Functionally, calcium-dependent phospholipid-binding protein that may play a role in calcium-mediated intracellular processes. The chain is Copine-7 from Mus musculus (Mouse).